The sequence spans 256 residues: Dioxygenase lolE1 (256 aa).

Fe cation-binding residues include His-125, Asp-127, and His-203.

The protein belongs to the PhyH family. As to quaternary structure, homodimer. Fe cation is required as a cofactor.

Its pathway is alkaloid biosynthesis. In terms of biological role, dioxygenase; part of the gene cluster that mediates the biosynthesis of loline alkaloids, potent insecticidal agents composed of a pyrrolizidine ring system and an uncommon ether bridge linking carbons 2 and 7. Lolines are structurally differentiated by the various modifications of the L-amino group and include norloline, loline, N-methylloline, N-acetylloline, N-acetylnorloline, and N-formylloline. The first committed step is the condensation of O-acetyl-L-homoserine (derived from L-aspartic acid) and L-proline, probably catalyzed by the gamma-type pyridoxal 5'-phosphate(PLP)-dependent enzyme lolC, to give the diamino diacid, NACPP. Ensuing cyclization, decarboxylation, and acetylation steps yield 1-exo-acetamidopyrrolizidine (AcAP). LolO is required for installation of the ether bridge upon the pathway intermediate, 1-exo-acetamidopyrrolizidine (AcAP). In sequential 2-oxoglutarate- and O(2)-consuming steps, lolO removes hydrogens from C2 and C7 of AcAP to form both carbon-oxygen bonds in N-acetylnorloline (NANL), the precursor to all other lolines. The enzymes lolD, lolE, lolF and lolT have also been proposed to be involved in the ether-bridge installation. Further processing of the exocyclic moiety of NANL by fungal N-acetamidase (LolN), methyltransferase (LolM), and cytochrome P450 (LolP) enzymes, with occasional involvement of a plant acetyltransferase, generates the other known lolines. LolN transforms NANL to norlonine which is monomethylated and dimethylated to respectively lonine and N-methyllonine (NML) by lolM. LolP catalyzes hydroxylation of the methyl group in N-methylloline (NML) and further oxygenation to N-formylloline (NFL). A plant acetyltransferase is responsible for the acetylation of loline to form N-acetylloline (NAL). LolA might interact with aspartate kinase to prevent feedback inhibition of its activity by these end products and thereby promote production of L-homoserine from L-aspartate. This Epichloe uncinata (Endophyte fungus) protein is Dioxygenase lolE1.